Consider the following 307-residue polypeptide: Potassium channel subfamily K member 7 (307 aa).

At 1-10 (MGGLRPWSRY) the chain is on the cytoplasmic side. The helical transmembrane segment at 11–31 (GLLVVAHLLALGLGAVVFQAL) threads the bilayer. The N-linked (GlcNAc...) asparagine glycan is linked to Asn83. The pore-forming intramembrane region spans 92–119 (LPSALLFAASILTTTGYGHMAPLSPGGK). Residues 120–140 (AFCMVYAALGLPASLALVATL) traverse the membrane as a helical segment. Residues 141–170 (RHCLLPVLSRPRAWVAVHWQLSPARAALLQ) are Cytoplasmic-facing. A helical transmembrane segment spans residues 171-191 (AVALGLLVASSFVLLPALVLW). The pore-forming intramembrane region spans 199–227 (LLGAVYFCFSSLSTIGLEDLLPGRGRSLH). A helical membrane pass occupies residues 233 to 253 (LGQLALLGYLLLGLLAMLLAV). Over 254-307 (ETFSELPQVRAMGKFFRPSGPVTAEDQGGILGQDELALSTLPPAAPASGQAPAC) the chain is Cytoplasmic.

Belongs to the two pore domain potassium channel (TC 1.A.1.8) family. In terms of assembly, homodimer.

Its subcellular location is the membrane. Its function is as follows. Probable potassium channel subunit. No channel activity observed in vitro as protein remains in the endoplasmic reticulum. May need to associate with an as yet unknown partner in order to reach the plasma membrane. The polypeptide is Potassium channel subfamily K member 7 (KCNK7) (Homo sapiens (Human)).